The following is a 579-amino-acid chain: Pre-mRNA-processing protein 45 (579 aa).

Disordered stretches follow at residues 1-64 (MTSV…GWRP), 218-254 (QQDPMEPPKFKHKKIPRGPPSPPPPIMHSPPRKLTAE), 343-414 (QKAR…TERR), and 521-579 (AAEA…VDDD). Residues 234–245 (RGPPSPPPPIMH) are compositionally biased toward pro residues. The segment covering 343-359 (QKAREERAASNRRDSRA) has biased composition (basic and acidic residues). Positions 366 to 379 (ASRSPSAYSRSATP) are enriched in low complexity. 3 stretches are compositionally biased toward basic and acidic residues: residues 386-414 (ARERERIRRERRQDAERQLRQSRMGTERR), 521-538 (AAEAEARDGPVQFEKDTT), and 563-579 (EVEREDRGSKRARVDDD).

The protein belongs to the SNW family. Associated with the spliceosome.

The protein resides in the nucleus. Involved in pre-mRNA splicing. The protein is Pre-mRNA-processing protein 45 (prp45) of Aspergillus fumigatus (strain ATCC MYA-4609 / CBS 101355 / FGSC A1100 / Af293) (Neosartorya fumigata).